Here is a 206-residue protein sequence, read N- to C-terminus: Emopamil-binding protein-like (206 aa).

4 consecutive transmembrane segments (helical) span residues 10 to 30, 42 to 62, 101 to 121, and 165 to 185; these read EAGG…ALGL, GALI…GPFV, VEIL…YAIV, and CWLY…LLLW. The region spanning 39 to 184 is the EXPERA domain; the sequence is ADRGALIWLC…VWVLIPGLLL (146 aa).

It belongs to the EBP family. As to quaternary structure, homodimer. In terms of tissue distribution, widely expressed with highest levels in liver, lung and kidney.

It localises to the endoplasmic reticulum membrane. Its function is as follows. Does not possess sterol isomerase activity and does not bind sigma ligands. This chain is Emopamil-binding protein-like (EBPL), found in Homo sapiens (Human).